Consider the following 291-residue polypeptide: Glycine--tRNA ligase alpha subunit (291 aa).

The protein belongs to the class-II aminoacyl-tRNA synthetase family. As to quaternary structure, tetramer of two alpha and two beta subunits.

The protein localises to the cytoplasm. The catalysed reaction is tRNA(Gly) + glycine + ATP = glycyl-tRNA(Gly) + AMP + diphosphate. The polypeptide is Glycine--tRNA ligase alpha subunit (Geobacter metallireducens (strain ATCC 53774 / DSM 7210 / GS-15)).